The primary structure comprises 246 residues: MAEPESLLEQLRGHFGGRLTDCWLERGEVTADVRPADLLAVMTELRDGAEWRFEQLSDVAGVDYAAYGQDEWITESATGTGFSRGVTEPGFGRLGLTGIYGVQSIEEQTGRRFAAVYQLLSLTHNHRLRVRCFAEDDDLPVLPSVTGIWPCANWAEREAFDLYGIVFEGHPDLRRILTDYGFVGHPFRKDFPLIGNVEPRYDPEKGRVVYGPVEIEPRVLVPRVIREDNRYAAPQKAEGTEGQADG.

The protein belongs to the complex I 30 kDa subunit family. NDH-1 is composed of 14 different subunits. Subunits NuoB, C, D, E, F, and G constitute the peripheral sector of the complex.

It localises to the cell inner membrane. It catalyses the reaction a quinone + NADH + 5 H(+)(in) = a quinol + NAD(+) + 4 H(+)(out). In terms of biological role, NDH-1 shuttles electrons from NADH, via FMN and iron-sulfur (Fe-S) centers, to quinones in the respiratory chain. The immediate electron acceptor for the enzyme in this species is believed to be ubiquinone. Couples the redox reaction to proton translocation (for every two electrons transferred, four hydrogen ions are translocated across the cytoplasmic membrane), and thus conserves the redox energy in a proton gradient. The sequence is that of NADH-quinone oxidoreductase subunit C from Halorhodospira halophila (strain DSM 244 / SL1) (Ectothiorhodospira halophila (strain DSM 244 / SL1)).